The following is a 466-amino-acid chain: Signal recognition particle 54 kDa protein (466 aa).

GTP is bound by residues 104 to 111, 184 to 188, and 242 to 245; these read GLQGSGKT, DTAGR, and TKLD. Positions 444–466 are disordered; sequence MQQGGGGGGGGGGGLGGMGPFGD. Residues 446 to 466 show a composition bias toward gly residues; it reads QGGGGGGGGGGGLGGMGPFGD.

This sequence belongs to the GTP-binding SRP family. SRP54 subfamily. In terms of assembly, part of the signal recognition particle protein translocation system, which is composed of SRP and FtsY. Archaeal SRP consists of a 7S RNA molecule of 300 nucleotides and two protein subunits: SRP54 and SRP19.

It is found in the cytoplasm. The catalysed reaction is GTP + H2O = GDP + phosphate + H(+). Involved in targeting and insertion of nascent membrane proteins into the cytoplasmic membrane. Binds to the hydrophobic signal sequence of the ribosome-nascent chain (RNC) as it emerges from the ribosomes. The SRP-RNC complex is then targeted to the cytoplasmic membrane where it interacts with the SRP receptor FtsY. The chain is Signal recognition particle 54 kDa protein from Natronomonas pharaonis (strain ATCC 35678 / DSM 2160 / CIP 103997 / JCM 8858 / NBRC 14720 / NCIMB 2260 / Gabara) (Halobacterium pharaonis).